A 366-amino-acid chain; its full sequence is Ribosomal RNA large subunit methyltransferase M (366 aa).

S-adenosyl-L-methionine is bound by residues serine 188, 221–224 (CPGG), aspartate 240, aspartate 260, and aspartate 277. Lysine 306 acts as the Proton acceptor in catalysis.

This sequence belongs to the class I-like SAM-binding methyltransferase superfamily. RNA methyltransferase RlmE family. RlmM subfamily. Monomer.

Its subcellular location is the cytoplasm. The catalysed reaction is cytidine(2498) in 23S rRNA + S-adenosyl-L-methionine = 2'-O-methylcytidine(2498) in 23S rRNA + S-adenosyl-L-homocysteine + H(+). Catalyzes the 2'-O-methylation at nucleotide C2498 in 23S rRNA. The polypeptide is Ribosomal RNA large subunit methyltransferase M (Cronobacter sakazakii (strain ATCC BAA-894) (Enterobacter sakazakii)).